The chain runs to 64 residues: Large ribosomal subunit protein bL33 (64 aa).

The segment covering 16–25 has biased composition (basic and acidic residues); sequence EARTSSEPRR. The disordered stretch occupies residues 16–41; that stretch reads EARTSSEPRRSNGVSRYTTEKNKRNT.

It belongs to the bacterial ribosomal protein bL33 family.

This chain is Large ribosomal subunit protein bL33, found in Prochlorococcus marinus subsp. pastoris (strain CCMP1986 / NIES-2087 / MED4).